A 90-amino-acid polypeptide reads, in one-letter code: Small ribosomal subunit protein bS20 (90 aa).

This sequence belongs to the bacterial ribosomal protein bS20 family.

Functionally, binds directly to 16S ribosomal RNA. This Francisella philomiragia subsp. philomiragia (strain ATCC 25017 / CCUG 19701 / FSC 153 / O#319-036) protein is Small ribosomal subunit protein bS20.